Here is a 191-residue protein sequence, read N- to C-terminus: Leucyl/phenylalanyl-tRNA--protein transferase (191 aa).

Belongs to the L/F-transferase family.

The protein localises to the cytoplasm. It carries out the reaction N-terminal L-lysyl-[protein] + L-leucyl-tRNA(Leu) = N-terminal L-leucyl-L-lysyl-[protein] + tRNA(Leu) + H(+). The catalysed reaction is N-terminal L-arginyl-[protein] + L-leucyl-tRNA(Leu) = N-terminal L-leucyl-L-arginyl-[protein] + tRNA(Leu) + H(+). The enzyme catalyses L-phenylalanyl-tRNA(Phe) + an N-terminal L-alpha-aminoacyl-[protein] = an N-terminal L-phenylalanyl-L-alpha-aminoacyl-[protein] + tRNA(Phe). Functionally, functions in the N-end rule pathway of protein degradation where it conjugates Leu, Phe and, less efficiently, Met from aminoacyl-tRNAs to the N-termini of proteins containing an N-terminal arginine or lysine. This Nostoc punctiforme (strain ATCC 29133 / PCC 73102) protein is Leucyl/phenylalanyl-tRNA--protein transferase.